Reading from the N-terminus, the 238-residue chain is Small ribosomal subunit protein eS4 (238 aa).

The 63-residue stretch at 38 to 100 (LPLAIVIRDV…TGEVYRVVPD (63 aa)) folds into the S4 RNA-binding domain.

This sequence belongs to the eukaryotic ribosomal protein eS4 family.

The chain is Small ribosomal subunit protein eS4 from Pyrobaculum arsenaticum (strain DSM 13514 / JCM 11321 / PZ6).